The chain runs to 308 residues: Transaldolase (308 aa).

Catalysis depends on K125, which acts as the Schiff-base intermediate with substrate.

It belongs to the transaldolase family. Type 1 subfamily. As to quaternary structure, homodimer.

The protein resides in the cytoplasm. It carries out the reaction D-sedoheptulose 7-phosphate + D-glyceraldehyde 3-phosphate = D-erythrose 4-phosphate + beta-D-fructose 6-phosphate. Its pathway is carbohydrate degradation; pentose phosphate pathway; D-glyceraldehyde 3-phosphate and beta-D-fructose 6-phosphate from D-ribose 5-phosphate and D-xylulose 5-phosphate (non-oxidative stage): step 2/3. In terms of biological role, transaldolase is important for the balance of metabolites in the pentose-phosphate pathway. The protein is Transaldolase of Pseudomonas putida (strain ATCC 47054 / DSM 6125 / CFBP 8728 / NCIMB 11950 / KT2440).